The following is a 1069-amino-acid chain: MALDGELGEQEEEKKKKKKKKRKKKKEEEEEEEGAEKSSSPFAAAMGEDDAALRAGSRGLSDPWADSVGVRPRTTERHIAVHKRLVLAFAVSLVALLAVTMLAVLLSLRFDECGASATPGADGGPSGFPERGGNGSLPGSARRNHHAGGDSWQPEAGGVASPGTTSAQPPSEEEREPWEPWTQLRLSGHLKPLHYNLMLTAFMENFTFSGEVNVEIACRNATRYVVLHASRVAVEKVQLAEDRAFGAVPVAGFFLYPQTQVLVVVLNRTLDAQRNYNLKIIYNALIENELLGFFRSSYVLHGERRFLGVTQFSPTHARKAFPCFDEPIYKATFKISIKHQATYLSLSNMPVETSVFEEDGWVTDHFSQTPLMSTYYLAWAICNFTYRETTTKSGVVVRLYARPDAIRRGSGDYALHITKRLIEFYEDYFKVPYSLPKLDLLAVPKHPYAAMENWGLSIFVEQRILLDPSVSSISYLLDVTMVIVHEICHQWFGDLVTPVWWEDVWLKEGFAHYFEFVGTDYLYPGWNMEKQRFLTDVLHEVMLLDGLASSHPVSQEVLQATDIDRVFDWIAYKKGAALIRMLANFMGHSVFQRGLQDYLTIHKYGNAARNDLWNTLSEALKRNGKYVNIQEVMDQWTLQMGYPVITILGNTTAENRIIITQQHFIYDISAKTKALKLQNNSYLWQIPLTIVVGNRSHVSSEAIIWVSNKSEHHRITYLDKGSWLLGNINQTGYFRVNYDLRNWRLLIDQLIRNHEVLSVSNRAGLIDDAFSLARAGYLPQNIPLEIIRYLSEEKDFLPWHAASRALYPLDKLLDRMENYNIFNEYILKQVATTYIKLGWPKNNFNGSLVQASYQHEELRREVIMLACSFGNKHCHQQASTLISDWISSNRNRIPLNVRDIVYCTGVSLLDEDVWEFIWMKFHSTTAVSEKKILLEALTCSDDRNLLNRLLNLSLNSEVVLDQDAIDVIIHVARNPHGRDLAWKFFRDKWKILNTRYGEALFMNSKLISGVTEFLNTEGELKELKNFMKNYDGVAAASFSRAVETVEANVRWKMLYQDELFQWLGKALRH.

Residues 1–11 (MALDGELGEQE) are compositionally biased toward acidic residues. The tract at residues 1-46 (MALDGELGEQEEEKKKKKKKKRKKKKEEEEEEEGAEKSSSPFAAAM) is disordered. At 1–85 (MALDGELGEQ…ERHIAVHKRL (85 aa)) the chain is on the cytoplasmic side. The segment covering 15–25 (KKKKKKKRKKK) has biased composition (basic residues). A helical; Signal-anchor for type II membrane protein membrane pass occupies residues 86–106 (VLAFAVSLVALLAVTMLAVLL). Over 107 to 1069 (SLRFDECGAS…FQWLGKALRH (963 aa)) the chain is Extracellular. Residues 117-179 (ATPGADGGPS…PSEEEREPWE (63 aa)) are disordered. The segment covering 121–136 (ADGGPSGFPERGGNGS) has biased composition (gly residues). Residues N134, N205, N220, N267, and N383 are each glycosylated (N-linked (GlcNAc...) asparagine). 449–453 (AAMEN) provides a ligand contact to substrate. H485 is a binding site for Zn(2+). The active-site Proton acceptor is E486. Residues H489 and E508 each coordinate Zn(2+). N-linked (GlcNAc...) asparagine glycans are attached at residues N650, N679, N694, N708, N729, N845, and N951.

The protein belongs to the peptidase M1 family. As to quaternary structure, homodimer; disulfide-linked. Zn(2+) is required as a cofactor. In terms of tissue distribution, predominantly expressed in brain.

The protein resides in the membrane. It catalyses the reaction Release of the N-terminal pyroglutamyl group from pGlu-|-His-Xaa tripeptides and pGlu-|-His-Xaa-Gly tetrapeptides.. In terms of biological role, specific inactivation of TRH after its release. This chain is Thyrotropin-releasing hormone-degrading ectoenzyme (TRHDE), found in Homo sapiens (Human).